A 609-amino-acid polypeptide reads, in one-letter code: NURS complex subunit pir2 (609 aa).

Residues 1–25 show a composition bias toward basic and acidic residues; that stretch reads MSEVHQESEVEYSRWKRERSPERSQ. 2 disordered regions span residues 1 to 60 and 187 to 210; these read MSEV…RASG and EKPSIPDNDTDDSILPSNDPQLSK. Residues 27–36 show a composition bias toward low complexity; the sequence is RSQSPPGEQS. 2 positions are modified to phosphoserine: Ser-28 and Ser-30. Residues 37 to 57 show a composition bias toward basic and acidic residues; sequence AYHRERSPLRKRGNYYDDRTR. Over residues 201 to 210 the composition is skewed to polar residues; it reads LPSNDPQLSK. A C2H2-type zinc finger spans residues 474–499; it reads YRCHVGTCAKLFLGPEFVRKHINKKH.

Belongs to the ARS2 family. Interacts with ccr4.

The protein localises to the nucleus. The chain is NURS complex subunit pir2 from Schizosaccharomyces pombe (strain 972 / ATCC 24843) (Fission yeast).